A 1028-amino-acid chain; its full sequence is MADQNRQIKLAAAKKKLKEFQQKTIPSTGSAGPKKKRKVKGDQTDAPADRRSPENERVDVSQELEEAGAEHVSNPASAINTDNSAPQNYPADANGDEHPLENNRPLSSTESLRQLSQQLNGLLSESSTHINGDSDPPAVNEKELETRNQELSAALDSSALTNTQLTSKLETLTKQSQELSDQLQKERKEFEQKFTKEQGAMREQLQVHIQTIGILVSEKSELQTALSYTQQAARQKAAEAEDLSSRLQASKQRVSELERTLSSVSTQQKQHERHNKELEKERDSLRLEIIRFNNVSEESRQQSSELSEQLKLRVNENSALKLELEDLRKRLEMADVMLQQFSSQSGPPSEHQQLQLLLEEKHQLENHATQLMESVAQLQAERDQYAVQMQEDGRVWKDKTEQLLSQVRLMSEERDSTAAQILELQERIMELENTAAVMSTEQEPQASSQLSGPSETELALQETLRSLQEERDALSLQFQAQVRDNEQLSRLVQEQEVKLQELERQAERASEDAQDRLRILEDVQSDKATISRALTQNRELKDQLAELQNGFVKLTNENMELTSALQSEQHVKKEIARKMGQLQEDLHNAKEQLLESSSELTSVQEQRDQYLAHLQQYSAGYQQLLAEREHLQKQFLQQTQLMDRLQHDEVQGKVQLEQSHMQLQEVQEKLSRLVRDNEELKTEVQELLNGSIMNTSHRDEGDGLESQTLPESFQKSQIAIPEDFESREEMKEFIHSVLSRVEAERDEMSRRLEEERRIHQDTRQQLTALSHDHHHHHHHEPHSTCAETDGSEGVPVEVHEALRVAMEKLQERFTKLMQEKADLKERLEELEHRCIQLSGETDTIGEYIALYQNQRAIMKQKHVEKEQYINMLAKDKEEMKTKLAELQDLVMRLVGERNEWYSRYMSAVGNRDLLNSNAEQIHPAERRMEISGVDAPAVLDMSTAMDVSSSPQSSTAEIQSQSSERPAADPISSPSLRPQEDGTARQIMQLLQEIQNPQSRPAPFLGENPCIPFFYRPDEHDEVKILVV.

The disordered stretch occupies residues 1–112 (MADQNRQIKL…NRPLSSTESL (112 aa)). Over residues 40 to 60 (KGDQTDAPADRRSPENERVDV) the composition is skewed to basic and acidic residues. The segment covering 74–87 (NPASAINTDNSAPQ) has biased composition (polar residues). 5 coiled-coil regions span residues 162–200 (NTQLTSKLETLTKQSQELSDQLQKERKEFEQKFTKEQGA), 233–388 (ARQK…YAVQ), 414–690 (RDST…LLNG), 738–769 (LSRVEAERDEMSRRLEEERRIHQDTRQQLTAL), and 799–840 (HEAL…LSGE). Residues 259 to 280 (RTLSSVSTQQKQHERHNKELEK) form a disordered region. A disordered region spans residues 756 to 791 (RRIHQDTRQQLTALSHDHHHHHHHEPHSTCAETDGS). Residues 944–981 (AMDVSSSPQSSTAEIQSQSSERPAADPISSPSLRPQED) form a disordered region. Residues 945–964 (MDVSSSPQSSTAEIQSQSSE) are compositionally biased toward polar residues.

It belongs to the GOLGA2 family.

The protein resides in the golgi apparatus. It is found in the cis-Golgi network membrane. The protein localises to the endoplasmic reticulum-Golgi intermediate compartment membrane. Its subcellular location is the cytoplasm. It localises to the cytoskeleton. The protein resides in the spindle pole. Functionally, peripheral membrane component of the cis-Golgi stack that acts as a membrane skeleton that maintains the structure of the Golgi apparatus, and as a vesicle thether that facilitates vesicle fusion to the Golgi membrane. Required for normal protein transport from the endoplasmic reticulum to the Golgi apparatus and the cell membrane. Plays a central role in mitotic Golgi disassembly. Also plays a key role in spindle pole assembly and centrosome organization. It probably promotes mitotic spindle pole assembly by activating assembly factors to nucleate microtubules around the Golgi and capture them to couple mitotic membranes to the spindle. Also required for the Golgi ribbon formation and glycosylation of membrane and secretory proteins. The protein is Golgin subfamily A member 2 of Danio rerio (Zebrafish).